The sequence spans 327 residues: Probable cell division protein WhiA (327 aa).

Residues Ser-275–Lys-308 constitute a DNA-binding region (H-T-H motif).

It belongs to the WhiA family.

In terms of biological role, involved in cell division and chromosome segregation. In Mycobacterium leprae (strain Br4923), this protein is Probable cell division protein WhiA.